The primary structure comprises 673 residues: Acetate--CoA ligase [ADP-forming] II (673 aa).

Residues 9–45 (KALLEKYGIKTAKCIFCETEEQAVKAAKEIGFPVVMK) enclose the ATP-grasp domain. An ATP-binding site is contributed by 35 to 46 (AKEIGFPVVMKV).

In the N-terminal section; belongs to the acetate CoA ligase beta subunit family. This sequence in the C-terminal section; belongs to the acetate CoA ligase alpha subunit family. Homodimer.

The enzyme catalyses acetate + ATP + CoA = acetyl-CoA + ADP + phosphate. Activity requires divalent metal cations. Functionally, catalyzes the reversible conversion of a variety of acids to the corresponding acyl-CoA esters. Shows the highest activity with the aryl acids, indoleacetate and phenylacetate, as compared to acetate. In the reverse direction, phenylacetyl-CoA is the best substrate. Seems to be involved primarily in the degradation of aryl-CoA esters to the corresponding acids. Participates in the degradation of branched-chain amino acids via branched-chain-acyl-CoA esters. This chain is Acetate--CoA ligase [ADP-forming] II, found in Archaeoglobus fulgidus (strain ATCC 49558 / DSM 4304 / JCM 9628 / NBRC 100126 / VC-16).